The following is a 411-amino-acid chain: Heparan-sulfate 6-O-sulfotransferase 1 (411 aa).

The Cytoplasmic segment spans residues 1–19 (MRRRRAGGRTMVERASKFV). The helical; Signal-anchor for type II membrane protein transmembrane segment at 20-37 (LVVAGSACFMLILYQYAG) threads the bilayer. Residues 38–411 (PGLSLGAPGG…DYMSHIIEKW (374 aa)) are Lumenal-facing. 93-101 (HIQKTGGTT) provides a ligand contact to 3'-phosphoadenylyl sulfate. Substrate is bound by residues 123-124 (KK), arginine 140, tryptophan 145, and histidine 150. Catalysis depends on histidine 150, which acts as the Proton acceptor. 3'-phosphoadenylyl sulfate contacts are provided by arginine 185 and serine 193. Residues histidine 197 and tryptophan 204 each coordinate substrate. An N-linked (GlcNAc...) asparagine glycan is attached at asparagine 264. Residue 317–319 (MQY) coordinates 3'-phosphoadenylyl sulfate. N-linked (GlcNAc...) asparagine glycosylation occurs at asparagine 320. 323–324 (RA) contacts 3'-phosphoadenylyl sulfate. Residues 352-386 (KDLFQQRYQYKRQLERREQRLRNREERLLHRSKEA) are a coiled coil. Positions 380–401 (LHRSKEALPREDPEEPGRVPTE) are disordered.

This sequence belongs to the sulfotransferase 6 family. In terms of processing, N-glycosylated. As to expression, expressed in fetal brain and liver.

It is found in the membrane. The enzyme catalyses alpha-D-glucosaminyl-[heparan sulfate](n) + 3'-phosphoadenylyl sulfate = 6-sulfo-alpha-D-glucosaminyl-[heparan sulfate](n) + adenosine 3',5'-bisphosphate + H(+). Its function is as follows. 6-O-sulfation enzyme which catalyzes the transfer of sulfate from 3'-phosphoadenosine 5'-phosphosulfate (PAPS) to position 6 of the N-sulfoglucosamine residue (GlcNS) of heparan sulfate. Critical for normal neuronal development where it may play a role in neuron branching. May also play a role in limb development. May prefer iduronic acid. This chain is Heparan-sulfate 6-O-sulfotransferase 1, found in Mus musculus (Mouse).